Consider the following 120-residue polypeptide: Large ribosomal subunit protein eL34 (120 aa).

Belongs to the eukaryotic ribosomal protein eL34 family.

The polypeptide is Large ribosomal subunit protein eL34 (RPL34) (Pisum sativum (Garden pea)).